An 82-amino-acid polypeptide reads, in one-letter code: Small ribosomal subunit protein bS16 (82 aa).

It belongs to the bacterial ribosomal protein bS16 family.

This Vibrio campbellii (strain ATCC BAA-1116) protein is Small ribosomal subunit protein bS16.